Here is a 265-residue protein sequence, read N- to C-terminus: Probable S-methyl-5'-thioinosine phosphorylase (265 aa).

Phosphate-binding positions include serine 15 and 55–56 (RH). Methionine 187 lines the substrate pocket. Residue threonine 188 coordinates phosphate. Position 211–213 (211–213 (NYA)) interacts with substrate.

It belongs to the PNP/MTAP phosphorylase family. MTAP subfamily. Homotrimer.

The enzyme catalyses S-methyl-5'-thioinosine + phosphate = 5-(methylsulfanyl)-alpha-D-ribose 1-phosphate + hypoxanthine. Its pathway is purine metabolism; purine nucleoside salvage. In terms of biological role, catalyzes the reversible phosphorylation of S-methyl-5'-thioinosine (MTI) to hypoxanthine and 5-methylthioribose-1-phosphate. Involved in the breakdown of S-methyl-5'-thioadenosine (MTA), a major by-product of polyamine biosynthesis. Catabolism of (MTA) occurs via deamination to MTI and phosphorolysis to hypoxanthine. This is Probable S-methyl-5'-thioinosine phosphorylase from Thermodesulfovibrio yellowstonii (strain ATCC 51303 / DSM 11347 / YP87).